The chain runs to 317 residues: Tenomodulin (317 aa).

Over 1–30 the chain is Cytoplasmic; it reads MAKNPPENCEDCHILNAEAFKSKKICKSLK. A helical; Signal-anchor for type II membrane protein membrane pass occupies residues 31–50; it reads ICGLVFGILALTLIVLFWGS. The Extracellular segment spans residues 51–317; sequence KHFWPEVPKK…WWVARMLGRV (267 aa). Positions 93 to 186 constitute a BRICHOS domain; sequence GNGTDETLEV…ICDNVTMYWI (94 aa). N94 carries N-linked (GlcNAc...) asparagine glycosylation. A disulfide bond links C120 and C178. N180 is a glycosylation site (N-linked (GlcNAc...) asparagine). S239 bears the Phosphoserine mark.

It belongs to the chondromodulin-1 family. In terms of tissue distribution, highly expressed in hypovascular connective tissues such as tendons. Also has strong expression in adipose tissue.

Its subcellular location is the membrane. The protein resides in the nucleus envelope. The protein localises to the cytoplasm. Functionally, may be an angiogenesis inhibitor. In Homo sapiens (Human), this protein is Tenomodulin (TNMD).